A 206-amino-acid polypeptide reads, in one-letter code: Ras-related protein Rab7 (206 aa).

GTP is bound by residues 15 to 22 (GDSGVGKT), 63 to 67 (DTAGQ), and 125 to 128 (NKID). S-geranylgeranyl cysteine attachment occurs at residues Cys204 and Cys206. Cys206 bears the Cysteine methyl ester mark.

The protein belongs to the small GTPase superfamily. Rab family.

It localises to the cell membrane. Its function is as follows. Protein transport. Probably involved in vesicular traffic. The protein is Ras-related protein Rab7 of Pisum sativum (Garden pea).